A 391-amino-acid polypeptide reads, in one-letter code: DNA-directed RNA polymerase subunit Rpo1C (391 aa).

It belongs to the RNA polymerase beta' chain family. In terms of assembly, part of the RNA polymerase complex.

It is found in the cytoplasm. The catalysed reaction is RNA(n) + a ribonucleoside 5'-triphosphate = RNA(n+1) + diphosphate. DNA-dependent RNA polymerase (RNAP) catalyzes the transcription of DNA into RNA using the four ribonucleoside triphosphates as substrates. Forms part of the jaw domain. The sequence is that of DNA-directed RNA polymerase subunit Rpo1C from Thermococcus gammatolerans (strain DSM 15229 / JCM 11827 / EJ3).